We begin with the raw amino-acid sequence, 179 residues long: Large ribosomal subunit protein uL5c (179 aa).

The protein belongs to the universal ribosomal protein uL5 family. As to quaternary structure, part of the 50S ribosomal subunit; contacts the 5S rRNA.

Its subcellular location is the plastid. The protein resides in the chloroplast. Binds 5S rRNA, forms part of the central protuberance of the 50S subunit. This is Large ribosomal subunit protein uL5c (rpl5) from Euglena gracilis.